The following is a 165-amino-acid chain: Growth arrest and DNA damage-inducible protein GADD45 alpha (165 aa).

A Phosphothreonine modification is found at Thr2.

The protein belongs to the GADD45 family. In terms of assembly, interacts with AURKA, GADD45GIP1 and PCNA. Interacts with MAPK14.

It is found in the nucleus. Functionally, might affect PCNA interaction with some CDK (cell division protein kinase) complexes; stimulates DNA excision repair in vitro and inhibits entry of cells into S phase. In T-cells, functions as a regulator of p38 MAPKs by inhibiting p88 phosphorylation and activity. This is Growth arrest and DNA damage-inducible protein GADD45 alpha (Gadd45a) from Mus musculus (Mouse).